The following is a 170-amino-acid chain: Endoribonuclease YbeY (170 aa).

Zn(2+)-binding residues include His-128, His-132, and His-138.

It belongs to the endoribonuclease YbeY family. Zn(2+) is required as a cofactor.

The protein localises to the cytoplasm. Single strand-specific metallo-endoribonuclease involved in late-stage 70S ribosome quality control and in maturation of the 3' terminus of the 16S rRNA. The chain is Endoribonuclease YbeY from Ruegeria sp. (strain TM1040) (Silicibacter sp.).